A 153-amino-acid chain; its full sequence is 6,7-dimethyl-8-ribityllumazine synthase 1 (153 aa).

5-amino-6-(D-ribitylamino)uracil-binding positions include F16, 50–52 (AYE), and 74–76 (CVI). Residue 79–80 (ET) participates in (2S)-2-hydroxy-3-oxobutyl phosphate binding. The active-site Proton donor is the H82. Position 107 (F107) interacts with 5-amino-6-(D-ribitylamino)uracil. A (2S)-2-hydroxy-3-oxobutyl phosphate-binding site is contributed by R121.

This sequence belongs to the DMRL synthase family.

The catalysed reaction is (2S)-2-hydroxy-3-oxobutyl phosphate + 5-amino-6-(D-ribitylamino)uracil = 6,7-dimethyl-8-(1-D-ribityl)lumazine + phosphate + 2 H2O + H(+). It functions in the pathway cofactor biosynthesis; riboflavin biosynthesis; riboflavin from 2-hydroxy-3-oxobutyl phosphate and 5-amino-6-(D-ribitylamino)uracil: step 1/2. In terms of biological role, catalyzes the formation of 6,7-dimethyl-8-ribityllumazine by condensation of 5-amino-6-(D-ribitylamino)uracil with 3,4-dihydroxy-2-butanone 4-phosphate. This is the penultimate step in the biosynthesis of riboflavin. The sequence is that of 6,7-dimethyl-8-ribityllumazine synthase 1 from Caulobacter vibrioides (strain ATCC 19089 / CIP 103742 / CB 15) (Caulobacter crescentus).